We begin with the raw amino-acid sequence, 654 residues long: RNA polymerase I-specific transcription initiation factor tif-1A (654 aa).

Residues 1–37 (MKRSTANAPKLSPKHESESDPKKVKLEEEAKPTVNQA) are disordered. Positions 13–31 (PKHESESDPKKVKLEEEAK) are enriched in basic and acidic residues.

The protein belongs to the RRN3 family.

The protein localises to the nucleus. It is found in the nucleolus. In terms of biological role, required for efficient transcription initiation by RNA polymerase I (Pol I). This chain is RNA polymerase I-specific transcription initiation factor tif-1A, found in Caenorhabditis elegans.